The chain runs to 80 residues: Conotoxin Bu14 (80 aa).

The first 8 residues, 1-8 (AACQLGTA), serve as a signal peptide directing secretion. The propeptide occupies 9–40 (ASFARDKQDYPAVRSDGRQDSKDSTLDRIAKR). 3 disulfides stabilise this stretch: Cys-41-Cys-55, Cys-48-Cys-59, and Cys-54-Cys-69.

The protein belongs to the conotoxin O1 superfamily. As to expression, expressed by the venom duct.

It localises to the secreted. The protein is Conotoxin Bu14 of Conus bullatus (Bubble cone).